A 159-amino-acid chain; its full sequence is Transcription elongation factor GreA (159 aa).

Residues 1–76 (MAEEKEVVLT…SLEKTLKKAR (76 aa)) are a coiled coil.

This sequence belongs to the GreA/GreB family.

Necessary for efficient RNA polymerase transcription elongation past template-encoded arresting sites. The arresting sites in DNA have the property of trapping a certain fraction of elongating RNA polymerases that pass through, resulting in locked ternary complexes. Cleavage of the nascent transcript by cleavage factors such as GreA or GreB allows the resumption of elongation from the new 3'terminus. GreA releases sequences of 2 to 3 nucleotides. The chain is Transcription elongation factor GreA from Syntrophomonas wolfei subsp. wolfei (strain DSM 2245B / Goettingen).